The primary structure comprises 1274 residues: Clustered mitochondria protein homolog (1274 aa).

Residues 1–53 (MAQTNGELEHSKGMSSPAVRISQAQKSTKLTVDPESPEQVANGTHAEGEQPEE) are disordered. 3 TPR repeats span residues 293 to 326 (SPSF…PNNP), 510 to 543 (DYGG…KKHP), and 628 to 661 (AKEA…ERVD). Residues 342 to 586 (DITRSQENYL…RVTPLDVMWQ (245 aa)) form the Clu domain. Disordered regions lie at residues 631 to 655 (AAKK…EEAL) and 893 to 925 (VSNG…ARAA). TPR repeat units follow at residues 998 to 1031 (AKLY…TERT), 1040 to 1073 (ILSY…WKII), 1082 to 1115 (ITTM…CESL), and 1124 to 1157 (ATIL…FLQQ). Positions 1197-1274 (INMTPRTLGT…KLRGSKKSSA (78 aa)) are disordered. The segment covering 1200–1217 (TPRTLGTRVQPQVGQTAP) has biased composition (polar residues).

It belongs to the CLU family. In terms of assembly, may associate with the eukaryotic translation initiation factor 3 (eIF-3) complex.

It is found in the cytoplasm. Functionally, mRNA-binding protein involved in proper cytoplasmic distribution of mitochondria. The protein is Clustered mitochondria protein homolog of Aspergillus terreus (strain NIH 2624 / FGSC A1156).